The primary structure comprises 310 residues: Probable manganese-dependent inorganic pyrophosphatase (310 aa).

6 residues coordinate Mn(2+): H9, D13, D15, D76, H98, and D150.

The protein belongs to the PPase class C family. It depends on Mn(2+) as a cofactor.

The protein resides in the cytoplasm. It carries out the reaction diphosphate + H2O = 2 phosphate + H(+). This is Probable manganese-dependent inorganic pyrophosphatase from Streptococcus thermophilus (strain ATCC BAA-491 / LMD-9).